Consider the following 1096-residue polypeptide: Lysine-specific demethylase 4B (1096 aa).

The JmjN domain occupies 15–57 (IMTFRPTMEEFKDFNKYVAYIESQGAHRAGLAKIIPPKEWKPR). Tyr-133 is a binding site for 2-oxoglutarate. In terms of domain architecture, JmjC spans 146–309 (VAQWNIGSLR…YGKVATQCTC (164 aa)). Fe cation contacts are provided by His-189 and Glu-191. Residues Asn-199 and Lys-207 each contribute to the 2-oxoglutarate site. Residues Cys-235 and His-241 each coordinate Zn(2+). 2-oxoglutarate is bound at residue Lys-242. Residue His-277 participates in Fe cation binding. 2 residues coordinate Zn(2+): Cys-307 and Cys-309. Residues 369–382 (LLRRSHRKRSQPKK) show a composition bias toward basic residues. Disordered stretches follow at residues 369-478 (LLRR…SEEA) and 557-649 (KGPT…VSDP). Positions 391-406 (PGEGTAGAALLEEAGG) are enriched in low complexity. Acidic residues predominate over residues 413-425 (GPEVDPEEEEEEP). Over residues 430–443 (HGREAEGAEEDGRG) the composition is skewed to basic and acidic residues. Over residues 444 to 458 (KLRPTKAKSERKKKS) the composition is skewed to basic residues. Ser-566 carries the phosphoserine modification. Position 602 is an N6-acetyllysine (Lys-602). The span at 632 to 648 (SSDEEASPFSGEEDVSD) shows a compositional bias: acidic residues. Residues 731–789 (MCFTSGGENTEPLPANSYIGDDGTSPLIACGKCCLQVHASCYGIRPELVNEGWTCSRCA) form a PHD-type 1 zinc finger. The segment at 794 to 827 (TAECCLCNLRGGALQMTTDRRWIHVICAIAVPEA) adopts a C2HC pre-PHD-type zinc-finger fold. A PHD-type 2 zinc finger spans residues 850-907 (LKCVYCRKRMKKVSGACIQCSYEHCSTSFHVTCAHAAGVLMEPDDWPYVVSITCLKHK). Tudor domains lie at 917 to 974 (RAVS…CVQL) and 975 to 1031 (GPPS…EELP). The interval 1037–1073 (RLSLSTGAPQEPAFSGEEAKAAKRPRVGTPLATEDSG) is disordered. Thr-1065 bears the Phosphothreonine mark.

It belongs to the JHDM3 histone demethylase family. Fe(2+) serves as cofactor.

Its subcellular location is the nucleus. The enzyme catalyses N(6),N(6),N(6)-trimethyl-L-lysyl(9)-[histone H3] + 2 2-oxoglutarate + 2 O2 = N(6)-methyl-L-lysyl(9)-[histone H3] + 2 formaldehyde + 2 succinate + 2 CO2. Functionally, histone demethylase that specifically demethylates 'Lys-9' of histone H3, thereby playing a role in histone code. Does not demethylate histone H3 'Lys-4', H3 'Lys-27', H3 'Lys-36' nor H4 'Lys-20'. Only able to demethylate trimethylated H3 'Lys-9', with a weaker activity than KDM4A, KDM4C and KDM4D. Demethylation of Lys residue generates formaldehyde and succinate. Plays a critical role in the development of the central nervous system (CNS). This chain is Lysine-specific demethylase 4B (KDM4B), found in Homo sapiens (Human).